The sequence spans 129 residues: RxLR effector protein PexRD43 (129 aa).

A signal peptide spans 1–16 (MRLAMILLSIPLFVSG). Positions 44–56 (RSLRTSGEANEER) match the RxLR-dEER motif.

It belongs to the RxLR effector family.

It localises to the secreted. The protein resides in the host cytoplasm. The protein localises to the host nucleus. Its function is as follows. Effector that enhances P.infestans colonization of Nicotiana benthamiana leaves. The protein is RxLR effector protein PexRD43 of Phytophthora infestans (strain T30-4) (Potato late blight agent).